The sequence spans 452 residues: Pup--protein ligase (452 aa).

Residue E9 coordinates Mg(2+). R53 serves as a coordination point for ATP. Y55 contacts Mg(2+). The active-site Proton acceptor is D57. Mg(2+) is bound at residue E63. Residues T66 and W419 each coordinate ATP.

This sequence belongs to the Pup ligase/Pup deamidase family. Pup-conjugating enzyme subfamily.

It carries out the reaction ATP + [prokaryotic ubiquitin-like protein]-L-glutamate + [protein]-L-lysine = ADP + phosphate + N(6)-([prokaryotic ubiquitin-like protein]-gamma-L-glutamyl)-[protein]-L-lysine.. It participates in protein degradation; proteasomal Pup-dependent pathway. The protein operates within protein modification; protein pupylation. Catalyzes the covalent attachment of the prokaryotic ubiquitin-like protein modifier Pup to the proteasomal substrate proteins, thereby targeting them for proteasomal degradation. This tagging system is termed pupylation. The ligation reaction involves the side-chain carboxylate of the C-terminal glutamate of Pup and the side-chain amino group of a substrate lysine. This Mycolicibacterium vanbaalenii (strain DSM 7251 / JCM 13017 / BCRC 16820 / KCTC 9966 / NRRL B-24157 / PYR-1) (Mycobacterium vanbaalenii) protein is Pup--protein ligase.